The following is a 206-amino-acid chain: Sclerostin domain-containing protein 1 (206 aa).

Residues 1-23 (MLPPAIHLSLIPLLCILMRNCLA) form the signal peptide. The disordered stretch occupies residues 42 to 62 (AHPSSNSTLNQARNGGRHFSS). Polar residues predominate over residues 44-62 (PSSNSTLNQARNGGRHFSS). An N-linked (GlcNAc...) asparagine glycan is attached at Asn47. Cystine bridges form between Cys75–Cys133, Cys89–Cys147, Cys100–Cys163, and Cys104–Cys165. The 96-residue stretch at 75-170 (CRELRSTKYI…TACKCKRYTR (96 aa)) folds into the CTCK domain. An N-linked (GlcNAc...) asparagine glycan is attached at Asn173. The interval 176–206 (SHNFESVSPAKPAQHHRERKRASKSSKHSLS) is disordered. The span at 188 to 206 (AQHHRERKRASKSSKHSLS) shows a compositional bias: basic residues.

This sequence belongs to the sclerostin family. In terms of assembly, interacts with BMP2, BMP4, BMP6 and BMP7 with high affinity. As to expression, highly expressed in kidney at renal collecting ducts level and weakly in brain.

The protein resides in the secreted. May be involved in the onset of endometrial receptivity for implantation/sensitization for the decidual cell reaction. Enhances Wnt signaling and inhibits TGF-beta signaling. Directly antagonizes activity of BMP2, BMP4, BMP6 and BMP7 in a dose-dependent manner. The polypeptide is Sclerostin domain-containing protein 1 (Sostdc1) (Mus musculus (Mouse)).